Consider the following 437-residue polypeptide: Glutamyl-tRNA reductase (437 aa).

Residues Thr-49–Arg-52, Ser-109, Glu-114–Gln-116, and Gln-120 contribute to the substrate site. The Nucleophile role is filled by Cys-50. An NADP(+)-binding site is contributed by Gly-198–Ser-203.

This sequence belongs to the glutamyl-tRNA reductase family. In terms of assembly, homodimer.

It carries out the reaction (S)-4-amino-5-oxopentanoate + tRNA(Glu) + NADP(+) = L-glutamyl-tRNA(Glu) + NADPH + H(+). It functions in the pathway porphyrin-containing compound metabolism; protoporphyrin-IX biosynthesis; 5-aminolevulinate from L-glutamyl-tRNA(Glu): step 1/2. The protein operates within porphyrin-containing compound metabolism; chlorophyll biosynthesis. In terms of biological role, catalyzes the NADPH-dependent reduction of glutamyl-tRNA(Glu) to glutamate 1-semialdehyde (GSA). This Prochlorococcus marinus (strain SARG / CCMP1375 / SS120) protein is Glutamyl-tRNA reductase.